The primary structure comprises 209 residues: Small ribosomal subunit protein uS3c (209 aa).

One can recognise a KH type-2 domain in the interval 39 to 109; it reads IRSCIEKQLH…QIRINLIEIT (71 aa).

The protein belongs to the universal ribosomal protein uS3 family. In terms of assembly, part of the 30S ribosomal subunit.

Its subcellular location is the plastid. The protein localises to the chloroplast. This is Small ribosomal subunit protein uS3c (rps3) from Gracilaria tenuistipitata (Red alga).